The sequence spans 360 residues: Phospho-N-acetylmuramoyl-pentapeptide-transferase (360 aa).

Transmembrane regions (helical) follow at residues 2–22 (IAILVSGAVGLLVSLFGTPLF), 52–72 (MGGVVIIAATVLGYTVANISA), 80–100 (GLLLLFLMIGLGVIGFLDDFI), 114–134 (WKIIGQGVIGVTFSVLALQFP), 156–176 (LAFAGAAVGLVLFVIWANFLI), 189–209 (LDGLATGVSVFVFSAYVVVTM), 235–255 (LAIVTAAIVGACAGFLWWNAS), 259–279 (IFMGDTGALALGGALAGLSIL), 284–304 (FLAVIIGGLFVVIVLSDVIQI), and 338–358 (FWLIAALFVALGVGIFYAEWV).

This sequence belongs to the glycosyltransferase 4 family. MraY subfamily. Mg(2+) serves as cofactor.

Its subcellular location is the cell membrane. It catalyses the reaction UDP-N-acetyl-alpha-D-muramoyl-L-alanyl-gamma-D-glutamyl-meso-2,6-diaminopimeloyl-D-alanyl-D-alanine + di-trans,octa-cis-undecaprenyl phosphate = di-trans,octa-cis-undecaprenyl diphospho-N-acetyl-alpha-D-muramoyl-L-alanyl-D-glutamyl-meso-2,6-diaminopimeloyl-D-alanyl-D-alanine + UMP. The protein operates within cell wall biogenesis; peptidoglycan biosynthesis. Its function is as follows. Catalyzes the initial step of the lipid cycle reactions in the biosynthesis of the cell wall peptidoglycan: transfers peptidoglycan precursor phospho-MurNAc-pentapeptide from UDP-MurNAc-pentapeptide onto the lipid carrier undecaprenyl phosphate, yielding undecaprenyl-pyrophosphoryl-MurNAc-pentapeptide, known as lipid I. The chain is Phospho-N-acetylmuramoyl-pentapeptide-transferase from Beutenbergia cavernae (strain ATCC BAA-8 / DSM 12333 / CCUG 43141 / JCM 11478 / NBRC 16432 / NCIMB 13614 / HKI 0122).